We begin with the raw amino-acid sequence, 311 residues long: Methionyl-tRNA formyltransferase (311 aa).

Residue 112 to 115 participates in (6S)-5,6,7,8-tetrahydrofolate binding; it reads SLLP.

It belongs to the Fmt family.

The enzyme catalyses L-methionyl-tRNA(fMet) + (6R)-10-formyltetrahydrofolate = N-formyl-L-methionyl-tRNA(fMet) + (6S)-5,6,7,8-tetrahydrofolate + H(+). Attaches a formyl group to the free amino group of methionyl-tRNA(fMet). The formyl group appears to play a dual role in the initiator identity of N-formylmethionyl-tRNA by promoting its recognition by IF2 and preventing the misappropriation of this tRNA by the elongation apparatus. This is Methionyl-tRNA formyltransferase from Bradyrhizobium diazoefficiens (strain JCM 10833 / BCRC 13528 / IAM 13628 / NBRC 14792 / USDA 110).